The following is a 219-amino-acid chain: Ribose-5-phosphate isomerase A (219 aa).

Substrate-binding positions include 28-31, 81-84, and 94-97; these read TGST, DGAD, and KGGG. Residue E103 is the Proton acceptor of the active site. A substrate-binding site is contributed by K121.

The protein belongs to the ribose 5-phosphate isomerase family. In terms of assembly, homodimer.

It carries out the reaction aldehydo-D-ribose 5-phosphate = D-ribulose 5-phosphate. Its pathway is carbohydrate degradation; pentose phosphate pathway; D-ribose 5-phosphate from D-ribulose 5-phosphate (non-oxidative stage): step 1/1. Its function is as follows. Catalyzes the reversible conversion of ribose-5-phosphate to ribulose 5-phosphate. In Salmonella arizonae (strain ATCC BAA-731 / CDC346-86 / RSK2980), this protein is Ribose-5-phosphate isomerase A.